The sequence spans 242 residues: Segregation and condensation protein A (242 aa).

This sequence belongs to the ScpA family. As to quaternary structure, component of a cohesin-like complex composed of ScpA, ScpB and the Smc homodimer, in which ScpA and ScpB bind to the head domain of Smc. The presence of the three proteins is required for the association of the complex with DNA.

Its subcellular location is the cytoplasm. Participates in chromosomal partition during cell division. May act via the formation of a condensin-like complex containing Smc and ScpB that pull DNA away from mid-cell into both cell halves. This chain is Segregation and condensation protein A, found in Lactococcus lactis subsp. lactis (strain IL1403) (Streptococcus lactis).